The sequence spans 123 residues: Small ribosomal subunit protein uS12 (123 aa).

Residues 9 to 32 form a disordered region; that stretch reads ANPREVQKSRKKVPALQQSPQKRG. Asp89 is subject to 3-methylthioaspartic acid.

The protein belongs to the universal ribosomal protein uS12 family. Part of the 30S ribosomal subunit. Contacts proteins S8 and S17. May interact with IF1 in the 30S initiation complex.

In terms of biological role, with S4 and S5 plays an important role in translational accuracy. Its function is as follows. Interacts with and stabilizes bases of the 16S rRNA that are involved in tRNA selection in the A site and with the mRNA backbone. Located at the interface of the 30S and 50S subunits, it traverses the body of the 30S subunit contacting proteins on the other side and probably holding the rRNA structure together. The combined cluster of proteins S8, S12 and S17 appears to hold together the shoulder and platform of the 30S subunit. The sequence is that of Small ribosomal subunit protein uS12 from Bradyrhizobium sp. (strain BTAi1 / ATCC BAA-1182).